Here is a 486-residue protein sequence, read N- to C-terminus: MGNVFFLLLFSLTHFPLAQQSRCTLTIGISSYHSSPCSPTQPVCTWNLDLNSLTTDQRLHPPCPNLITYSGFHKTYSLYLFPHWIKKPNRQGLGYYSPSYNDPCSLQCPYLGCQAWTSAYTGPVSSPSWKFHSDVNFTQEVSQVSLRLHFSKCGSSMTLLVDAPGYDPLWFITSEPTQPPPTSPPLVHDSDLEHVLTPSTSWTTKILKFIQLTLQSTNYSCMVCVDRSSLSSWHVLYTPNISIPQQTSSRTILFPSLALPAPPSQPFPWTHCYQPRLQAITTDNCNNSIILPPFSLAPVPPPATRRRRAVPIAVWLVSALAAGTGIAGGVTGSLSLASSKSLLLEVDKDISHLTQAIVKNHQNILRVAQYAAQNRRGLDLLFWEQGGLCKAIQEQCCFLNISNTHVSVLQERPPLEKRVITGWGLNWDLGLSQWAREALQTGITILALLLLVILFGPCILRQIQALPQRLQNRHNQYSLINPETML.

An N-terminal signal peptide occupies residues 1-18 (MGNVFFLLLFSLTHFPLA). The Extracellular portion of the chain corresponds to 19 to 438 (QQSRCTLTIG…LGLSQWAREA (420 aa)). N-linked (GlcNAc...) asparagine; by host glycans are attached at residues Asn-136 and Asn-218. The short motif at 221-224 (CMVC) is the CXXC element. 3 disulfide bridges follow: Cys-221–Cys-224, Cys-221–Cys-397, and Cys-389–Cys-396. N-linked (GlcNAc...) asparagine; by host glycosylation is found at Asn-240 and Asn-286. Residues 309–329 (AVPIAVWLVSALAAGTGIAGG) are fusion peptide. 2 coiled-coil regions span residues 337 to 383 (ASSK…LLFW) and 393 to 425 (QEQCCFLNISNTHVSVLQERPPLEKRVITGWGL). An immunosuppression region spans residues 372–388 (AQNRRGLDLLFWEQGGL). The CX6CC motif lies at 389–397 (CKAIQEQCC). N-linked (GlcNAc...) asparagine; by host glycosylation occurs at Asn-400. The chain crosses the membrane as a helical span at residues 439 to 459 (LQTGITILALLLLVILFGPCI). Residue Cys-458 is the site of S-palmitoyl cysteine; by host attachment. Topologically, residues 460 to 486 (LRQIQALPQRLQNRHNQYSLINPETML) are cytoplasmic.

The mature envelope protein (Env) consists of a trimer of SU-TM heterodimers attached by a labile interchain disulfide bond. In terms of processing, specific enzymatic cleavages in vivo yield mature proteins. Envelope glycoproteins are synthesized as an inactive precursor that is N-glycosylated and processed likely by host cell furin or by a furin-like protease in the Golgi to yield the mature SU and TM proteins. The cleavage site between SU and TM requires the minimal sequence [KR]-X-[KR]-R. Post-translationally, the CXXC motif is highly conserved across a broad range of retroviral envelope proteins. It is thought to participate in the formation of a labile disulfide bond possibly with the CX6CC motif present in the transmembrane protein. Isomerization of the intersubunit disulfide bond to an SU intrachain disulfide bond is thought to occur upon receptor recognition in order to allow membrane fusion. The transmembrane protein is palmitoylated.

It is found in the virion membrane. The protein resides in the host cell membrane. Functionally, the surface protein (SU) attaches the virus to the host cell by binding to its receptor. This interaction triggers the refolding of the transmembrane protein (TM) and is thought to activate its fusogenic potential by unmasking its fusion peptide. Fusion occurs at the host cell plasma membrane. Its function is as follows. The transmembrane protein (TM) acts as a class I viral fusion protein. Under the current model, the protein has at least 3 conformational states: pre-fusion native state, pre-hairpin intermediate state, and post-fusion hairpin state. During viral and target cell membrane fusion, the coiled coil regions (heptad repeats) assume a trimer-of-hairpins structure, positioning the fusion peptide in close proximity to the C-terminal region of the ectodomain. The formation of this structure appears to drive apposition and subsequent fusion of viral and target cell membranes. Membranes fusion leads to delivery of the nucleocapsid into the cytoplasm. This chain is Envelope glycoprotein gp63 (env), found in Homo sapiens (Human).